The sequence spans 87 residues: DNA-directed RNA polymerase subunit omega (87 aa).

Belongs to the RNA polymerase subunit omega family. As to quaternary structure, the RNAP catalytic core consists of 2 alpha, 1 beta, 1 beta' and 1 omega subunit. When a sigma factor is associated with the core the holoenzyme is formed, which can initiate transcription.

It catalyses the reaction RNA(n) + a ribonucleoside 5'-triphosphate = RNA(n+1) + diphosphate. Promotes RNA polymerase assembly. Latches the N- and C-terminal regions of the beta' subunit thereby facilitating its interaction with the beta and alpha subunits. The protein is DNA-directed RNA polymerase subunit omega of Pseudomonas fluorescens (strain ATCC BAA-477 / NRRL B-23932 / Pf-5).